A 508-amino-acid chain; its full sequence is Photosystem II CP47 reaction center protein (508 aa).

Helical transmembrane passes span 21–36, 101–115, 140–156, 203–218, 237–252, and 457–472; these read SVHL…WAGS, IVLS…IWHW, GIHL…FGAF, IAAG…FHLT, VLSS…AFVV, and CFAL…HGAR.

It belongs to the PsbB/PsbC family. PsbB subfamily. PSII is composed of 1 copy each of membrane proteins PsbA, PsbB, PsbC, PsbD, PsbE, PsbF, PsbH, PsbI, PsbJ, PsbK, PsbL, PsbM, PsbT, PsbX, PsbY, PsbZ, Psb30/Ycf12, at least 3 peripheral proteins of the oxygen-evolving complex and a large number of cofactors. It forms dimeric complexes. The cofactor is Binds multiple chlorophylls. PSII binds additional chlorophylls, carotenoids and specific lipids..

The protein resides in the plastid. It is found in the chloroplast thylakoid membrane. Its function is as follows. One of the components of the core complex of photosystem II (PSII). It binds chlorophyll and helps catalyze the primary light-induced photochemical processes of PSII. PSII is a light-driven water:plastoquinone oxidoreductase, using light energy to abstract electrons from H(2)O, generating O(2) and a proton gradient subsequently used for ATP formation. In Chlorokybus atmophyticus (Soil alga), this protein is Photosystem II CP47 reaction center protein.